A 555-amino-acid polypeptide reads, in one-letter code: Formate--tetrahydrofolate ligase (555 aa).

64 to 71 (TKAGIGKT) contributes to the ATP binding site.

This sequence belongs to the formate--tetrahydrofolate ligase family.

It carries out the reaction (6S)-5,6,7,8-tetrahydrofolate + formate + ATP = (6R)-10-formyltetrahydrofolate + ADP + phosphate. Its pathway is one-carbon metabolism; tetrahydrofolate interconversion. The protein is Formate--tetrahydrofolate ligase of Parabacteroides distasonis (strain ATCC 8503 / DSM 20701 / CIP 104284 / JCM 5825 / NCTC 11152).